Consider the following 253-residue polypeptide: Small ribosomal subunit protein cS22 (253 aa).

A chloroplast-targeting transit peptide spans 1-56 (MATFLTNVVSIKPTIFSFQSESFTPLHTRVNVFSSKPFPSLAGTFSRSSRTRFIPY). 2 RRM domains span residues 76-154 (RRVY…ITEK) and 177-253 (YKVY…VNKA).

Belongs to the chloroplast-specific ribosomal protein cS22 family. Component of the chloroplast small ribosomal subunit (SSU). Mature 70S chloroplast ribosomes of higher plants consist of a small (30S) and a large (50S) subunit. The 30S small subunit contains 1 molecule of ribosomal RNA (16S rRNA) and 24 different proteins. The 50S large subunit contains 3 rRNA molecules (23S, 5S and 4.5S rRNA) and 33 different proteins. Expressed constitutively in roots, stems, flower buds, flowers and leaves.

The protein resides in the plastid. Its subcellular location is the chloroplast. Functionally, component of the chloroplast ribosome (chloro-ribosome), a dedicated translation machinery responsible for the synthesis of chloroplast genome-encoded proteins, including proteins of the transcription and translation machinery and components of the photosynthetic apparatus. May have a role in the recruitment of stored chloroplast mRNAs for active protein synthesis. Bind single strand DNA (ssDNA) and RNA in vitro. Exhibits RNA chaperone activity. Negatively regulates resistance responses to abiotic stresses during seed germination (e.g. salt, dehydration, and low temperature) and seedling growth (e.g. salt). The chain is Small ribosomal subunit protein cS22 from Arabidopsis thaliana (Mouse-ear cress).